The chain runs to 107 residues: Small integral membrane protein 19 (107 aa).

A helical transmembrane segment spans residues 25 to 43; sequence ATNVYLIVILVSFGLFMYA.

The protein belongs to the SMIM19 family.

The protein localises to the membrane. The sequence is that of Small integral membrane protein 19 (SMIM19) from Homo sapiens (Human).